We begin with the raw amino-acid sequence, 60 residues long: Large ribosomal subunit protein bL32 (60 aa).

Over residues 1–20 (MAVPKRKTSPSRRNMRRSHH) the composition is skewed to basic residues. Positions 1-60 (MAVPKRKTSPSRRNMRRSHHALGANSFIEDKDTGELRRPHHVDLKTGMYNGKQILTPKED) are disordered. Over residues 28–44 (IEDKDTGELRRPHHVDL) the composition is skewed to basic and acidic residues.

It belongs to the bacterial ribosomal protein bL32 family.

The sequence is that of Large ribosomal subunit protein bL32 from Caulobacter vibrioides (strain ATCC 19089 / CIP 103742 / CB 15) (Caulobacter crescentus).